The following is a 115-amino-acid chain: Large ribosomal subunit protein bL20 (115 aa).

This sequence belongs to the bacterial ribosomal protein bL20 family.

In terms of biological role, binds directly to 23S ribosomal RNA and is necessary for the in vitro assembly process of the 50S ribosomal subunit. It is not involved in the protein synthesizing functions of that subunit. The protein is Large ribosomal subunit protein bL20 of Prochlorococcus marinus subsp. pastoris (strain CCMP1986 / NIES-2087 / MED4).